The primary structure comprises 265 residues: Triosephosphate isomerase (265 aa).

Position 13 to 15 (13 to 15 (NWK)) interacts with substrate. Residue H106 is the Electrophile of the active site. E179 acts as the Proton acceptor in catalysis. Residues G185, S223, and 244–245 (GG) contribute to the substrate site.

The protein belongs to the triosephosphate isomerase family. As to quaternary structure, homodimer.

It localises to the cytoplasm. The catalysed reaction is D-glyceraldehyde 3-phosphate = dihydroxyacetone phosphate. It participates in carbohydrate biosynthesis; gluconeogenesis. It functions in the pathway carbohydrate degradation; glycolysis; D-glyceraldehyde 3-phosphate from glycerone phosphate: step 1/1. In terms of biological role, involved in the gluconeogenesis. Catalyzes stereospecifically the conversion of dihydroxyacetone phosphate (DHAP) to D-glyceraldehyde-3-phosphate (G3P). The polypeptide is Triosephosphate isomerase (Acinetobacter baylyi (strain ATCC 33305 / BD413 / ADP1)).